A 296-amino-acid polypeptide reads, in one-letter code: Acetyl-coenzyme A carboxylase carboxyl transferase subunit beta (296 aa).

The region spanning 25-294 (LWIKDPSTGE…NSDAPAPPEA (270 aa)) is the CoA carboxyltransferase N-terminal domain.

It belongs to the AccD/PCCB family. In terms of assembly, acetyl-CoA carboxylase is a heterohexamer composed of biotin carboxyl carrier protein (AccB), biotin carboxylase (AccC) and two subunits each of ACCase subunit alpha (AccA) and ACCase subunit beta (AccD).

The protein localises to the cytoplasm. It catalyses the reaction N(6)-carboxybiotinyl-L-lysyl-[protein] + acetyl-CoA = N(6)-biotinyl-L-lysyl-[protein] + malonyl-CoA. It functions in the pathway lipid metabolism; malonyl-CoA biosynthesis; malonyl-CoA from acetyl-CoA: step 1/1. Its function is as follows. Component of the acetyl coenzyme A carboxylase (ACC) complex. Biotin carboxylase (BC) catalyzes the carboxylation of biotin on its carrier protein (BCCP) and then the CO(2) group is transferred by the transcarboxylase to acetyl-CoA to form malonyl-CoA. The protein is Acetyl-coenzyme A carboxylase carboxyl transferase subunit beta of Brucella ovis (strain ATCC 25840 / 63/290 / NCTC 10512).